Here is a 301-residue protein sequence, read N- to C-terminus: Protease HtpX (301 aa).

2 helical membrane passes run 4-24 (IGLF…VLFI) and 44-64 (TGLL…SLAM). Position 150 (H150) interacts with Zn(2+). E151 is a catalytic residue. Zn(2+) is bound at residue H154. A run of 2 helical transmembrane segments spans residues 165 to 185 (LIQG…GHFV) and 201 to 221 (FITS…IVMW). E227 contributes to the Zn(2+) binding site.

The protein belongs to the peptidase M48B family. It depends on Zn(2+) as a cofactor.

Its subcellular location is the cell inner membrane. The sequence is that of Protease HtpX from Alkalilimnicola ehrlichii (strain ATCC BAA-1101 / DSM 17681 / MLHE-1).